Reading from the N-terminus, the 330-residue chain is Stearoyl-CoA desaturase 5 (330 aa).

The Cytoplasmic segment spans residues 1-49 (MPGPATDAGKIPFCDAKEEIRAGLESSEGGGGPERPGARGQRQNIVWRN). Residue Asn-49 participates in substrate binding. Residues 50–70 (VVLMSLLHLGAVYSLVLIPKA) form a helical membrane-spanning segment. Residues 71–72 (KP) are Lumenal-facing. The helical transmembrane segment at 73–93 (LTLLWAYFCFLLAALGVTAGA) threads the bilayer. Residues His-94 and His-99 each coordinate Fe cation. Residues 94 to 99 (HRLWSH) carry the Histidine box-1 motif. Residues 94–193 (HRLWSHRSYR…VVRIQRKYYK (100 aa)) lie on the Cytoplasmic side of the membrane. Asn-122, Arg-129, and Asp-130 together coordinate substrate. The Fe cation site is built by His-131, His-134, and His-135. The Histidine box-2 signature appears at 131–135 (HRAHH). Residues Arg-162 and Lys-163 each coordinate substrate. The helical transmembrane segment at 194-214 (ISVVLMCFVVPTLVPWYIWGE) threads the bilayer. Position 215 (Ser-215) is a topological domain, lumenal. The chain crosses the membrane as a helical span at residues 216 to 238 (LWNSYFLASILRYTISLNISWLV). Trp-236 lines the substrate pocket. The Cytoplasmic portion of the chain corresponds to 239-330 (NSAAHMYGNR…RKARTGDSSA (92 aa)). His-243, His-272, His-275, and His-276 together coordinate Fe cation. A Histidine box-3 motif is present at residues 272-276 (HNYHH).

It belongs to the fatty acid desaturase type 1 family. In terms of assembly, may self-associate and form homodimers. Fe(2+) is required as a cofactor. As to expression, detected in fetal brain, and at lower levels in fetal kidney. Detected in adult brain and pancreas, and at lower levels in kidney and lung. Expressed in spiral ganglion cells and the organ of Corti of fetal cochlea.

It localises to the endoplasmic reticulum membrane. The enzyme catalyses octadecanoyl-CoA + 2 Fe(II)-[cytochrome b5] + O2 + 2 H(+) = (9Z)-octadecenoyl-CoA + 2 Fe(III)-[cytochrome b5] + 2 H2O. The catalysed reaction is hexadecanoyl-CoA + 2 Fe(II)-[cytochrome b5] + O2 + 2 H(+) = (9Z)-hexadecenoyl-CoA + 2 Fe(III)-[cytochrome b5] + 2 H2O. Functionally, stearoyl-CoA desaturase that utilizes O(2) and electrons from reduced cytochrome b5 to introduce the first double bond into saturated fatty acyl-CoA substrates. Catalyzes the insertion of a cis double bond at the delta-9 position into fatty acyl-CoA substrates including palmitoyl-CoA and stearoyl-CoA. Gives rise to a mixture of 16:1 and 18:1 unsaturated fatty acids. Involved in neuronal cell proliferation and differentiation through down-regulation of EGFR/AKT/MAPK and Wnt signaling pathways. The protein is Stearoyl-CoA desaturase 5 (SCD5) of Homo sapiens (Human).